Here is a 346-residue protein sequence, read N- to C-terminus: Elongation factor Ts (346 aa).

An involved in Mg(2+) ion dislocation from EF-Tu region spans residues 80–83 (TDFV).

This sequence belongs to the EF-Ts family.

It localises to the cytoplasm. Functionally, associates with the EF-Tu.GDP complex and induces the exchange of GDP to GTP. It remains bound to the aminoacyl-tRNA.EF-Tu.GTP complex up to the GTP hydrolysis stage on the ribosome. This is Elongation factor Ts from Streptococcus pyogenes serotype M18 (strain MGAS8232).